Here is a 513-residue protein sequence, read N- to C-terminus: Histone acetyltransferase KAT5 (513 aa).

The Tudor-knot domain occupies 8–65 (IEGCRLPVLRRNQDNEDEWPLAEILSVKDISGRKLFYVHYIDFNKRLDEWVTHERLDL). Residue Lys52 is modified to N6-acetyllysine. The interval 69 to 106 (QFPKKEAKTPTKNGLPGSRPGSPEREVPASAQASGKTL) is disordered. Position 86 is a phosphoserine; by GSK3 (Ser86). Ser90 bears the Phosphoserine; by CDK1 and CDK9 mark. An N6-acetyllysine; by autocatalysis mark is found at Lys104 and Lys120. The interval 122-220 (REAIPGGEPD…RMTGSLVSDR (99 aa)) is disordered. The span at 133 to 144 (PLSSSSCLQPNH) shows a compositional bias: polar residues. N6-acetyllysine; by autocatalysis is present on residues Lys148, Lys150, Lys187, and Lys189. At Ser199 the chain carries Phosphoserine. Residues 227-504 (TRMKNIECIE…IDSKCLHFTP (278 aa)) form the MYST-type HAT domain. Residues 260–285 (LYLCEFCLKYGRSLKCLQRHLTKCDL) form a C2HC MYST-type zinc finger. Residue Lys327 is modified to N6-acetyllysine; by autocatalysis. The interaction with ATF2 stretch occupies residues 368-513 (ACILTLPPYQ…PKDWSKRGKW (146 aa)). Acetyl-CoA is bound by residues 370-372 (ILT) and 377-383 (QRRGYGK). The active-site Proton donor/acceptor is the Glu403. Residues Ser407 and Ser416 each coordinate acetyl-CoA. Lys430 is covalently cross-linked (Glycyl lysine isopeptide (Lys-Gly) (interchain with G-Cter in SUMO1); alternate). Lys430 participates in a covalent cross-link: Glycyl lysine isopeptide (Lys-Gly) (interchain with G-Cter in SUMO2); alternate. Lys451 participates in a covalent cross-link: Glycyl lysine isopeptide (Lys-Gly) (interchain with G-Cter in SUMO1).

Belongs to the MYST (SAS/MOZ) family. Component of the NuA4 histone acetyltransferase complex which contains the catalytic subunit KAT5/TIP60 and the subunits EP400, TRRAP/PAF400, BRD8/SMAP, EPC1, DMAP1/DNMAP1, RUVBL1/TIP49, RUVBL2, ING3, actin, ACTL6A/BAF53A, MORF4L1/MRG15, MORF4L2/MRGX, MRGBP, YEATS4/GAS41, VPS72/YL1 and MEAF6. KAT5/TIP60, EPC1, and ING3 together constitute a minimal HAT complex termed Piccolo NuA4. The NuA4 complex interacts with MYC. Interacts with ATM. Interacts with JADE1. Interacts with PLA2G4A/CPLA2, EDNRA and HDAC7. Interacts with the cytoplasmic tail of APP and APBB1/FE65. Interacts with TRIM24 and TRIM68. Forms a complex with SENP6 and UBE2I in response to UV irradiation. Identified in a complex with HINT1. Interacts with ATF2 and CUL3. Interacts with NR1D2 (via N-terminus). Component of a SWR1-like complex. Interacts with FOXP3. Interacts with ZBTB49. Interacts with SRF. Interacts with ATF3; promoting autoacetylation and deubiquitination by USP7. Interacts with EP300/p300; interaction promotes KAT5 autoacetylation. Interacts with PRKDC; interaction is impaired following KAT5 sumoylation. Interacts with GPR50. Interacts with NME3; this interaction enables recruitment of NME3 at DNA damage sites where it plays a role in the repair of DNA. In terms of assembly, (Microbial infection) Interacts with HIV-1 TAT. In terms of processing, phosphorylated on Ser-86 and Ser-90; enhanced during G2/M phase. The phosphorylated form has a higher activity. Phosphorylation at Ser-90 by CDK1 or CDK9 is a prerequisite for phosphorylation at Ser-86 by GSK3. Phosphorylation at Ser-86 by GSK3 (GSK3A or GSK3B) activates acetyltransferase and acyltransferase activities. Phosphorylation at Ser-90 by CDK9 promotes KAT5 recruitment to chromatin. Phosphorylation by VRK1 following DNA damage promotes KAT5 association with chromatin and histone acetyltransferase activity. Post-translationally, autoacetylated. Autoacetylation is required for histone acetyltransferase activity. Autoacetylation at Lys-327 is facilitated by interaction with EP300/p300: it prevents ubiquitination and subsequent degradation by the proteasome and promotes acetylation of target proteins. Deacetylated by HDAC3 and SIRT1. Deacetylation by HDAC3 promotes its ubiquitination and cytoplasmic localization. Sumoylated by UBE2I at Lys-430 and Lys-451, leading to increase of its histone acetyltransferase activity in UV-induced DNA damage response, as well as its translocation to nuclear bodies. Sumoylation with SUMO2 by PIAS4 at Lys-430 promotes repair of DNA double-strand breaks (DSBs) via homologous recombination (HR). Sumoylation by PIAS4 impairs interaction with PRKDC, inhibiting non-homologous end joining (NHEJ)-mediated repair of DSBs, thereby facilitating HR. Desumoylated by SENP3. In terms of processing, ubiquitinated by MDM2, leading to its proteasome-dependent degradation. Ubiquitination is prevented by autoacetylation at Lys-327. Ubiquitinated following deacetylation by HDAC3, leading to cytoplasmic localization. Deubiquitinated by USP7 following interaction with ATF3, promoting its stabilization. Post-translationally, (Microbial infection) In case of HIV-1 infection, interaction with the viral Tat protein leads to KAT5 polyubiquitination and targets it to degradation.

The protein resides in the nucleus. The protein localises to the chromosome. It localises to the cytoplasm. Its subcellular location is the centromere. It is found in the kinetochore. The protein resides in the cytoskeleton. The protein localises to the spindle pole. It localises to the nucleolus. Its subcellular location is the perinuclear region. It catalyses the reaction L-lysyl-[histone] + acetyl-CoA = N(6)-acetyl-L-lysyl-[histone] + CoA + H(+). The catalysed reaction is L-lysyl-[protein] + acetyl-CoA = N(6)-acetyl-L-lysyl-[protein] + CoA + H(+). It carries out the reaction (2E)-butenoyl-CoA + L-lysyl-[protein] = N(6)-(2E)-butenoyl-L-lysyl-[protein] + CoA + H(+). The enzyme catalyses 2-hydroxyisobutanoyl-CoA + L-lysyl-[protein] = N(6)-(2-hydroxyisobutanoyl)-L-lysyl-[protein] + CoA + H(+). It catalyses the reaction (S)-lactoyl-CoA + L-lysyl-[protein] = N(6)-[(S)-lactoyl]-L-lysyl-[protein] + CoA + H(+). Acyltransferase and acetyltransferase activities are activated by phosphorylation and autoacetylation. Autoacetylation activates the histone acetyltransferase activity. Catalytic subunit of the NuA4 histone acetyltransferase complex, a multiprotein complex involved in transcriptional activation of select genes principally by acetylation of nucleosomal histones H2A and H4. Histone acetylation alters nucleosome-DNA interactions and promotes interaction of the modified histones with other proteins which positively regulate transcription. The NuA4 histone acetyltransferase complex is required for the activation of transcriptional programs associated with proto-oncogene mediated growth induction, tumor suppressor mediated growth arrest and replicative senescence, apoptosis, and DNA repair. The NuA4 complex plays a direct role in repair of DNA double-strand breaks (DSBs) by promoting homologous recombination (HR): the complex inhibits TP53BP1 binding to chromatin via MBTD1, which recognizes and binds histone H4 trimethylated at 'Lys-20' (H4K20me), and KAT5 that catalyzes acetylation of 'Lys-15' of histone H2A (H2AK15ac), thereby blocking the ubiquitination mark required for TP53BP1 localization at DNA breaks. Also involved in DSB repair by mediating acetylation of 'Lys-5' of histone H2AX (H2AXK5ac), promoting NBN/NBS1 assembly at the sites of DNA damage. The NuA4 complex plays a key role in hematopoietic stem cell maintenance and is required to maintain acetylated H2A.Z/H2AZ1 at MYC target genes. The NuA4 complex is also required for spermatid development by promoting acetylation of histones: histone hyperacetylation is required for histone replacement during the transition from round to elongating spermatids. Component of a SWR1-like complex that specifically mediates the removal of histone H2A.Z/H2AZ1 from the nucleosome. Also acetylates non-histone proteins, such as BMAL1, ATM, AURKB, CHKA, CGAS, ERCC4/XPF, LPIN1, TP53/p53, NDC80/HEC1, NR1D2, RAN, SOX4, FOXP3, SQSTM1, ULK1 and RUBCNL/Pacer. Directly acetylates and activates ATM. Promotes nucleotide excision repair (NER) by mediating acetylation of ERCC4/XPF, thereby promoting formation of the ERCC4-ERCC1 complex. Relieves NR1D2-mediated inhibition of APOC3 expression by acetylating NR1D2. Acts as a regulator of regulatory T-cells (Treg) by catalyzing FOXP3 acetylation, thereby promoting FOXP3 transcriptional repressor activity. Involved in skeletal myoblast differentiation by mediating acetylation of SOX4. Catalyzes acetylation of APBB1/FE65, increasing its transcription activator activity. Promotes transcription elongation during the activation phase of the circadian cycle by catalyzing acetylation of BMAL1, promoting elongation of circadian transcripts. Together with GSK3 (GSK3A or GSK3B), acts as a regulator of autophagy: phosphorylated at Ser-86 by GSK3 under starvation conditions, leading to activate acetyltransferase activity and promote acetylation of key autophagy regulators, such as ULK1 and RUBCNL/Pacer. Acts as a regulator of the cGAS-STING innate antiviral response by catalyzing acetylation the N-terminus of CGAS, thereby promoting CGAS DNA-binding and activation. Also regulates lipid metabolism by mediating acetylation of CHKA or LPIN1. Promotes lipolysis of lipid droplets following glucose deprivation by mediating acetylation of isoform 1 of CHKA, thereby promoting monomerization of CHKA and its conversion into a tyrosine-protein kinase. Acts as a regulator of fatty-acid-induced triacylglycerol synthesis by catalyzing acetylation of LPIN1, thereby promoting the synthesis of diacylglycerol. In addition to protein acetyltransferase, can use different acyl-CoA substrates, such as (2E)-butenoyl-CoA (crotonyl-CoA), S-lactoyl-CoA (lactyl-CoA) and 2-hydroxyisobutanoyl-CoA (2-hydroxyisobutyryl-CoA), and is able to mediate protein crotonylation, lactylation and 2-hydroxyisobutyrylation, respectively. Acts as a key regulator of chromosome segregation and kinetochore-microtubule attachment during mitosis by mediating acetylation or crotonylation of target proteins. Catalyzes acetylation of AURKB at kinetochores, increasing AURKB activity and promoting accurate chromosome segregation in mitosis. Acetylates RAN during mitosis, promoting microtubule assembly at mitotic chromosomes. Acetylates NDC80/HEC1 during mitosis, promoting robust kinetochore-microtubule attachment. Catalyzes crotonylation of MAPRE1/EB1, thereby ensuring accurate spindle positioning in mitosis. Catalyzes lactylation of NBN/NBS1 in response to DNA damage, thereby promoting DNA double-strand breaks (DSBs) via homologous recombination (HR). Its function is as follows. (Microbial infection) Catalyzes the acetylation of flavivirus NS3 protein to modulate their RNA-binding and -unwinding activities leading to facilitate viral replication. This Homo sapiens (Human) protein is Histone acetyltransferase KAT5.